Reading from the N-terminus, the 291-residue chain is Probable ABC transporter permease protein PH1038 (291 aa).

A run of 8 helical transmembrane segments spans residues 7–27, 75–95, 106–126, 133–153, 160–180, 208–228, 232–252, and 267–287; these read PFFFLLPALTLMVPFVIYPVF, IVWIAIHLPTTIFLGLGFALL, IIKSIIFLGMVIPMVVGGLII, GAGVIPAFFKLIGIEKLAITW, ALFSVILGSIWIWTGFSMLMY, FVIWPLLRPITVVIVAMTLLW, IFDIVYVATGGGPGGASMVLA, and YAAVVAVLLTALTFIPALWLI. One can recognise an ABC transmembrane type-1 domain in the interval 71 to 286; it reads LIHNIVWIAI…ALTFIPALWL (216 aa).

It belongs to the binding-protein-dependent transport system permease family. MalFG subfamily.

Its subcellular location is the cell membrane. Its function is as follows. Probably part of a binding-protein-dependent transport system PH1036/38/39. Probably responsible for the translocation of the substrate across the membrane. The polypeptide is Probable ABC transporter permease protein PH1038 (Pyrococcus horikoshii (strain ATCC 700860 / DSM 12428 / JCM 9974 / NBRC 100139 / OT-3)).